The following is a 240-amino-acid chain: Triosephosphate isomerase (240 aa).

8–10 (NWK) serves as a coordination point for substrate. The Electrophile role is filled by histidine 93. The Proton acceptor role is filled by glutamate 160. Glycine 166 contributes to the substrate binding site.

This sequence belongs to the triosephosphate isomerase family. Homodimer.

Its subcellular location is the cytoplasm. It catalyses the reaction D-glyceraldehyde 3-phosphate = dihydroxyacetone phosphate. The protein operates within carbohydrate biosynthesis; gluconeogenesis. Its pathway is carbohydrate degradation; glycolysis; D-glyceraldehyde 3-phosphate from glycerone phosphate: step 1/1. Its function is as follows. Involved in the gluconeogenesis. Catalyzes stereospecifically the conversion of dihydroxyacetone phosphate (DHAP) to D-glyceraldehyde-3-phosphate (G3P). The sequence is that of Triosephosphate isomerase from Ehrlichia chaffeensis (strain ATCC CRL-10679 / Arkansas).